Reading from the N-terminus, the 354-residue chain is Methionine import ATP-binding protein MetN 2 (354 aa).

The ABC transporter domain maps to 6–250 (IELKNISVHF…PQKPLTKEFI (245 aa)). ATP is bound at residue 42-49 (GYSGAGKS).

It belongs to the ABC transporter superfamily. Methionine importer (TC 3.A.1.24) family. In terms of assembly, the complex is composed of two ATP-binding proteins (MetN), two transmembrane proteins (MetI) and a solute-binding protein (MetQ).

It localises to the cell membrane. It carries out the reaction L-methionine(out) + ATP + H2O = L-methionine(in) + ADP + phosphate + H(+). The catalysed reaction is D-methionine(out) + ATP + H2O = D-methionine(in) + ADP + phosphate + H(+). In terms of biological role, part of the ABC transporter complex MetNIQ involved in methionine import. Responsible for energy coupling to the transport system. The sequence is that of Methionine import ATP-binding protein MetN 2 from Oenococcus oeni (strain ATCC BAA-331 / PSU-1).